The sequence spans 309 residues: MAQQEVVEGFKFEQRHGKERVRVARVWKTRQGQHFVVEWRVGITLFSDCVNSYLRDDNSDIVATDTMKNTVYAKAKECSDILSAEDFAILLAKHFVSFYKKVTGAIVNIVEKPWERVIVDGQPHEHGFKLGSEKHTTEAIVQKSGSLQLTSGIEGLSVLKTTQSGFVNFIRDKYTALPDTRERILATEVTALWRYSYESQYSLPQKPLYFTEKYQEVKKVLADTFFGPPNGGVYSPSVQNTLYLMAKATLNRFPDIAYVSLKMPNLHFLPVNISNKDGPIVKFEDDVYLPTDEPHGSIQASLSRLWSKL.

Catalysis depends on charge relay system residues Lys-18 and Thr-64. Positions 64, 65, 166, 183, 238, 239, and 265 each coordinate urate. The active-site Charge relay system is the His-267.

This sequence belongs to the uricase family. As to quaternary structure, homotetramer.

The protein localises to the peroxisome. The enzyme catalyses urate + O2 + H2O = 5-hydroxyisourate + H2O2. Its pathway is purine metabolism; urate degradation; (S)-allantoin from urate: step 1/3. Its function is as follows. Catalyzes the oxidation of uric acid to 5-hydroxyisourate, which is further processed to form (S)-allantoin. This is Uricase-2 isozyme 2 from Glycine max (Soybean).